Here is a 209-residue protein sequence, read N- to C-terminus: Large ribosomal subunit protein uL3 (209 aa).

The tract at residues 133 to 152 (THGNSLSHRVPGSIGQNQTP) is disordered. The residue at position 150 (Gln150) is an N5-methylglutamine.

It belongs to the universal ribosomal protein uL3 family. Part of the 50S ribosomal subunit. Forms a cluster with proteins L14 and L19. In terms of processing, methylated by PrmB.

One of the primary rRNA binding proteins, it binds directly near the 3'-end of the 23S rRNA, where it nucleates assembly of the 50S subunit. In Yersinia pseudotuberculosis serotype O:1b (strain IP 31758), this protein is Large ribosomal subunit protein uL3.